Here is a 291-residue protein sequence, read N- to C-terminus: MFKGSCVALITPFTEDGVNYEELRKLLEWHIKNHTDAILVCGTTGEGSTMTLEEKKEVIKFSVEVVNKRVPVIAGTGTNNTKASIELSKYAEEVGADMVLIITPYYNKTSQKGLYAHFNAINDAINIPIMLYNVPSRTGMNITPLMLDKLADLNNVVAIKEASGDLSQVAKMAELCGDRIAIYSGNDDQIVPILSLGGAGVVSVLANILPEETHNICEKYFLGEVIESRNLQLKYLSLANSLFIETNPIPVKTAMNLMNFNCGPLRLPLCEMEDSNLVILEENLKANGLIK.

Position 44 (Thr44) interacts with pyruvate. Tyr132 acts as the Proton donor/acceptor in catalysis. Lys160 functions as the Schiff-base intermediate with substrate in the catalytic mechanism. Pyruvate is bound at residue Val202.

This sequence belongs to the DapA family. As to quaternary structure, homotetramer; dimer of dimers.

It is found in the cytoplasm. The catalysed reaction is L-aspartate 4-semialdehyde + pyruvate = (2S,4S)-4-hydroxy-2,3,4,5-tetrahydrodipicolinate + H2O + H(+). It participates in amino-acid biosynthesis; L-lysine biosynthesis via DAP pathway; (S)-tetrahydrodipicolinate from L-aspartate: step 3/4. Catalyzes the condensation of (S)-aspartate-beta-semialdehyde [(S)-ASA] and pyruvate to 4-hydroxy-tetrahydrodipicolinate (HTPA). This chain is 4-hydroxy-tetrahydrodipicolinate synthase, found in Clostridium perfringens (strain ATCC 13124 / DSM 756 / JCM 1290 / NCIMB 6125 / NCTC 8237 / Type A).